A 470-amino-acid polypeptide reads, in one-letter code: Argininosuccinate lyase (470 aa).

It belongs to the lyase 1 family. Argininosuccinate lyase subfamily.

The protein resides in the cytoplasm. The catalysed reaction is 2-(N(omega)-L-arginino)succinate = fumarate + L-arginine. Its pathway is amino-acid biosynthesis; L-arginine biosynthesis; L-arginine from L-ornithine and carbamoyl phosphate: step 3/3. This Mycobacterium sp. (strain JLS) protein is Argininosuccinate lyase.